The primary structure comprises 160 residues: Arginine repressor (160 aa).

This sequence belongs to the ArgR family.

It is found in the cytoplasm. It participates in amino-acid biosynthesis; L-arginine biosynthesis [regulation]. In terms of biological role, regulates arginine biosynthesis genes. This Anaeromyxobacter dehalogenans (strain 2CP-1 / ATCC BAA-258) protein is Arginine repressor.